The sequence spans 1023 residues: uncharacterized protein (1023 aa).

The segment at 1–35 is disordered; the sequence is MAEKRPLGPLGPMMYGKLPRLEPDPGPGHSLPLSA. Position 17 is an N6-acetyllysine (K17). Phosphoserine occurs at positions 206 and 383. Disordered stretches follow at residues 381 to 501, 518 to 551, 703 to 742, 907 to 980, and 1002 to 1023; these read GASP…PVID, PEPRAERDSAPATSKSQDKDCKGNLPAQDGASRS, PAPASAPPPSPAPAPAPASGPAPSSAQVPTAAPVDSPEQH, EART…TLRA, and KASGADRSSPHPQLLGSQTHHL. T389 is subject to Phosphothreonine. Residues 391 to 400 show a composition bias toward polar residues; sequence PSHSQNSVQP. Basic and acidic residues-rich tracts occupy residues 425–436, 443–454, and 477–490; these read RPAEKPTPEAQE, CRKEQLQPRPNE, and CAKERQSVPQKDAR. 2 positions are modified to phosphoserine: S493 and S494. The segment covering 706–722 has biased composition (pro residues); the sequence is ASAPPPSPAPAPAPASG. S912, S964, and S972 each carry phosphoserine. Low complexity predominate over residues 963–972; the sequence is PSPSSGASTS.

This is an uncharacterized protein from Mus musculus (Mouse).